A 588-amino-acid polypeptide reads, in one-letter code: L-fucose isomerase (588 aa).

Residues glutamate 335 and aspartate 359 each act as proton acceptor in the active site. Mn(2+) is bound by residues glutamate 335, aspartate 359, and histidine 525.

The protein belongs to the L-fucose isomerase family. Requires Mn(2+) as cofactor.

The protein resides in the cytoplasm. The enzyme catalyses L-fucose = L-fuculose. It participates in carbohydrate degradation; L-fucose degradation; L-lactaldehyde and glycerone phosphate from L-fucose: step 1/3. Converts the aldose L-fucose into the corresponding ketose L-fuculose. This Streptococcus pneumoniae (strain P1031) protein is L-fucose isomerase.